A 341-amino-acid chain; its full sequence is Glyceraldehyde-3-phosphate dehydrogenase 2 (341 aa).

Residues 12–13 (RI), Arg-78, and Thr-120 contribute to the NAD(+) site. D-glyceraldehyde 3-phosphate contacts are provided by residues 152–154 (SCT) and Thr-183. Cys-153 functions as the Nucleophile in the catalytic mechanism. Asn-184 serves as a coordination point for NAD(+). D-glyceraldehyde 3-phosphate is bound by residues Arg-198, 211–212 (TG), and Arg-234. Asn-313 lines the NAD(+) pocket.

It belongs to the glyceraldehyde-3-phosphate dehydrogenase family. Homotetramer.

It is found in the cytoplasm. The catalysed reaction is D-glyceraldehyde 3-phosphate + phosphate + NAD(+) = (2R)-3-phospho-glyceroyl phosphate + NADH + H(+). It functions in the pathway carbohydrate degradation; glycolysis; pyruvate from D-glyceraldehyde 3-phosphate: step 1/5. In terms of biological role, catalyzes the oxidative phosphorylation of glyceraldehyde 3-phosphate (G3P) to 1,3-bisphosphoglycerate (BPG) using the cofactor NAD. The first reaction step involves the formation of a hemiacetal intermediate between G3P and a cysteine residue, and this hemiacetal intermediate is then oxidized to a thioester, with concomitant reduction of NAD to NADH. The reduced NADH is then exchanged with the second NAD, and the thioester is attacked by a nucleophilic inorganic phosphate to produce BPG. The chain is Glyceraldehyde-3-phosphate dehydrogenase 2 (gapA2) from Staphylococcus aureus (strain COL).